The primary structure comprises 152 residues: ALK and LTK ligand 1 (152 aa).

The signal sequence occupies residues 1-23 (MRAEKRWHILLSMILLLITSSQC). Cystine bridges form between Cys-113–Cys-149 and Cys-127–Cys-136.

The protein belongs to the ALKAL family. In terms of tissue distribution, expressed at low level in the notochord and iridophore stripes, the eye and the swim bladder.

The protein localises to the secreted. It localises to the cell membrane. Functionally, cytokine that acts as a physiological ligand for receptor tyrosine kinases LTK and ALK. Required for iridophore development in the adult eye by acting as a receptor for LTK. The sequence is that of ALK and LTK ligand 1 from Danio rerio (Zebrafish).